The sequence spans 262 residues: Tetratricopeptide repeat protein 33 (262 aa).

3 TPR repeats span residues 59 to 92 (SKQLKDEGASLAENKRYREAIQKWDEALQLTPND), 93 to 126 (ATLYEMKSQVLMSLHEMFPAVHAAEMAVQQNPHS), and 127 to 160 (WESWQTLGRAQLGLGEIILAIRSFQVALHIYPMN). Ser-197 carries the phosphoserine modification. Residue Thr-251 is modified to Phosphothreonine.

The chain is Tetratricopeptide repeat protein 33 (TTC33) from Homo sapiens (Human).